Here is a 325-residue protein sequence, read N- to C-terminus: Cytosolic Fe-S cluster assembly factor Nubp1 homolog (325 aa).

Residues 1 to 26 (MSSGADVPSDAPAHCPGTQSDDAGKA) are disordered. [4Fe-4S] cluster is bound by residues Cys-15, Cys-29, Cys-32, and Cys-38. Residue 68 to 75 (GKGGVGKS) coordinates ATP. Positions 243 and 246 each coordinate [4Fe-4S] cluster.

This sequence belongs to the Mrp/NBP35 ATP-binding proteins family. NUBP1/NBP35 subfamily. In terms of assembly, heterotetramer of 2 Nubp1 and 2 Nubp2 chains. [4Fe-4S] cluster serves as cofactor.

The protein localises to the cytoplasm. In terms of biological role, component of the cytosolic iron-sulfur (Fe/S) protein assembly (CIA) machinery. Required for maturation of extramitochondrial Fe-S proteins. The Nubp1-Nubp2 heterotetramer forms a Fe-S scaffold complex, mediating the de novo assembly of an Fe-S cluster and its transfer to target apoproteins. This chain is Cytosolic Fe-S cluster assembly factor Nubp1 homolog, found in Anopheles gambiae (African malaria mosquito).